The following is a 28-amino-acid chain: Antibacterial protein LC3 (28 aa).

Antibacterial activity against X.campestris, especially strain G, and P.solacearum PO1. This chain is Antibacterial protein LC3, found in Bacillus subtilis.